The sequence spans 781 residues: Chloride channel protein CLC-f (781 aa).

Disordered regions lie at residues 1–41 and 79–98; these read MSSG…QSPA and RERH…EEDG. Residues 10-20 show a composition bias toward basic and acidic residues; sequence NEDRHLLRSTD. 12 consecutive transmembrane segments (helical) span residues 129 to 149, 184 to 204, 221 to 241, 250 to 270, 279 to 299, 314 to 334, 350 to 370, 388 to 408, 433 to 453, 457 to 477, 502 to 522, and 523 to 543; these read WALL…VAGF, ILLI…LLEI, FLAG…LGTG, SVDI…NNRE, GAAS…FFAI, FTTA…NALL, AAEL…SVVF, FGLP…IIAL, APGI…TALC, GLVG…GAVF, ALVG…TSVL, and LLFE…AVGL. Residues 553 to 584 form a disordered region; that stretch reads QGKESDSSEGRSTGRGYSSLSPSERKTEGVWR. A compositionally biased stretch (basic and acidic residues) spans 575 to 584; that stretch reads SERKTEGVWR. 2 CBS domains span residues 621-677 and 699-763; these read MSKN…NAST and QERG…EMSR. A helical transmembrane segment spans residues 726–746; it reads QLPVVKRGEVIHKGKRRKLLG.

This sequence belongs to the chloride channel (TC 2.A.49) family. As to quaternary structure, homodimer.

Its subcellular location is the membrane. Its function is as follows. Voltage-gated chloride channel. The protein is Chloride channel protein CLC-f (CLC-F) of Arabidopsis thaliana (Mouse-ear cress).